We begin with the raw amino-acid sequence, 827 residues long: Inactive rhomboid protein 2 (827 aa).

The segment at 1–87 (MDSTDKNGES…GFRRQASLSQ (87 aa)) is disordered. The Cytoplasmic portion of the chain corresponds to 1–380 (MDSTDKNGES…HRPYFTYWLT (380 aa)). Residue Ser-60 is modified to Phosphoserine. The segment covering 64-77 (QRGRWQEGSSEKRP) has biased composition (basic and acidic residues). A phosphoserine mark is found at Ser-84, Ser-88, Ser-294, Ser-296, and Ser-299. Residues 381-401 (FVHIIITLLVICTYGIAPVGF) traverse the membrane as a helical segment. Residues 402–631 (AQHVTTQLVL…PDQFYRLWLS (230 aa)) are Lumenal-facing. Residues 632–652 (LFLHAGVVHCLVSVVFQMTIL) traverse the membrane as a helical segment. Topologically, residues 653-663 (RDLEKLAGWHR) are cytoplasmic. A helical membrane pass occupies residues 664–684 (IAIIFILSGITGNLASAIFLP). The Lumenal segment spans residues 685–686 (YR). Residues 687–707 (AEVGPAGSQFGLLACLFVELF) form a helical membrane-spanning segment. Topologically, residues 708 to 718 (QSWQLLERPWK) are cytoplasmic. A helical membrane pass occupies residues 719 to 739 (AFLNLSAIVLFLFICGLLPWI). The Lumenal segment spans residues 740–744 (DNIAH). The chain crosses the membrane as a helical span at residues 745 to 765 (IFGFLSGLLLAFAFLPYITFG). The Cytoplasmic segment spans residues 766–773 (TSDKYRKR). The helical transmembrane segment at 774 to 794 (ALILVSLLVFAGLFASLVIWL) threads the bilayer. Residues 795 to 827 (YVYPINWPWIEYLTCFPFTSRFCEKYELDQVLH) lie on the Lumenal side of the membrane.

Belongs to the peptidase S54 family. In terms of assembly, interacts with EGF. Interacts (via cytoplasmic N-terminus) with FRMD8/iTAP; this interaction leads to mutual protein stabilization. Interacts with ADAM17/TACE. In terms of tissue distribution, detected in retina and spleen.

The protein localises to the endoplasmic reticulum membrane. It localises to the cell membrane. Regulates ADAM17 protease, a sheddase of the epidermal growth factor (EGF) receptor ligands and TNF, thereby plays a role in sleep, cell survival, proliferation, migration and inflammation. Does not exhibit any protease activity on its own. The protein is Inactive rhomboid protein 2 (RHBDF2) of Canis lupus familiaris (Dog).